The chain runs to 232 residues: Gene 65 protein (232 aa).

The chain is Gene 65 protein (65) from Mycobacterium phage D29 (Mycobacteriophage D29).